Reading from the N-terminus, the 732-residue chain is Cullin-3B (732 aa).

Positions 662–724 (DRKPQIEAAI…RDFLERDNTD (63 aa)) constitute a Cullin neddylation domain. A Glycyl lysine isopeptide (Lys-Gly) (interchain with G-Cter in NEDD8) cross-link involves residue Lys676.

The protein belongs to the cullin family. In terms of assembly, interacts with BTB/POZ-MATH proteins BPM1 and BPM3. Post-translationally, neddylated. Deneddylated via its interaction with the COP9 signalosome (CSN) complex.

It functions in the pathway protein modification; protein ubiquitination. In terms of biological role, component of the cullin-RING ubiquitin ligases (CRL), or CUL3-RBX1-BTB protein E3 ligase complexes which mediate the ubiquitination and subsequent proteasomal degradation of target proteins. The functional specificity of the CRL complex depends on the BTB domain-containing protein as the substrate recognition component. Involved in embryo pattern formation and endosperm development. Required for the normal division and organization of the root stem cells and columella root cap cells. Regulates primary root growth by an unknown pathway, but in an ethylene-dependent manner. Functions in distal root patterning, by an ethylene-independent mechanism. Functionally redundant with CUL3A. This chain is Cullin-3B (CUL3B), found in Arabidopsis thaliana (Mouse-ear cress).